Reading from the N-terminus, the 445-residue chain is Xylose isomerase (445 aa).

Residues His107 and Asp110 contribute to the active site. Mg(2+) is bound by residues Glu238, Glu274, His277, Asp302, Asp313, Asp315, and Asp345.

This sequence belongs to the xylose isomerase family. Homotetramer. Mg(2+) is required as a cofactor.

It localises to the cytoplasm. The catalysed reaction is alpha-D-xylose = alpha-D-xylulofuranose. The protein is Xylose isomerase of Bacillus pumilus (strain SAFR-032).